The following is a 78-amino-acid chain: MNNLRVIMSVLLAVLVFTATVSESAEEMGKGEVTISLRCKTKTECLKNIACEACVDCRCDKGICKCHGFTAETNNPTV.

Positions 1–24 (MNNLRVIMSVLLAVLVFTATVSES) are cleaved as a signal peptide. 3 cysteine pairs are disulfide-bonded: cysteine 39–cysteine 59, cysteine 45–cysteine 64, and cysteine 51–cysteine 66.

Belongs to the DEFL family.

The protein localises to the secreted. The protein is Defensin-like protein 287 of Arabidopsis thaliana (Mouse-ear cress).